The following is a 596-amino-acid chain: Selenocysteine-specific elongation factor (596 aa).

Residues 5–217 enclose the tr-type G domain; sequence RVNVNVGVLG…LLTSQISIPT (213 aa). The G1 stretch occupies residues 14–21; that stretch reads GHIDSGKT. Residues glycine 19, threonine 21, and alanine 22 each contribute to the GDP site. Residues glycine 19, threonine 21, and alanine 22 each contribute to the GTP site. Mg(2+) is bound at residue threonine 21. The segment at 46–50 is G2; it reads GITLD. Positions 48 and 92 each coordinate Mg(2+). The interval 92–95 is G3; that stretch reads DCPG. The interval 146–149 is G4; the sequence is NKID. Residues aspartate 149 and lysine 187 each contribute to the GDP site. Residues aspartate 149 and lysine 187 each coordinate GTP. The interval 185–187 is G5; that stretch reads AAK. Serine 537 is subject to Phosphoserine. Phosphothreonine is present on threonine 545. Positions 547–553 match the Nuclear localization signal motif; the sequence is ALKKRAR. The disordered stretch occupies residues 548–573; sequence LKKRARAGRGEATRQEESAERSEPSQ. A compositionally biased stretch (basic and acidic residues) spans 555–571; it reads GRGEATRQEESAERSEP. The residue at position 556 (arginine 556) is an Omega-N-methylarginine.

This sequence belongs to the TRAFAC class translation factor GTPase superfamily. Classic translation factor GTPase family. SelB subfamily. Mg(2+) serves as cofactor. Requires Mn(2+) as cofactor.

It localises to the cytoplasm. The protein resides in the nucleus. It catalyses the reaction GTP + H2O = GDP + phosphate + H(+). Translation factor required for the incorporation of the rare amino acid selenocysteine encoded by UGA codons. Replaces the eRF1-eRF3-GTP ternary complex for the insertion of selenocysteine directed by the UGA codon. Insertion of selenocysteine at UGA codons is mediated by SECISBP2 and EEFSEC: SECISBP2 (1) specifically binds the SECIS sequence once the 80S ribosome encounters an in-frame UGA codon and (2) contacts the RPS27A/eS31 of the 40S ribosome before ribosome stalling. (3) GTP-bound EEFSEC then delivers selenocysteinyl-tRNA(Sec) to the 80S ribosome and adopts a preaccommodated state conformation. (4) After GTP hydrolysis, EEFSEC dissociates from the assembly, selenocysteinyl-tRNA(Sec) accommodates, and peptide bond synthesis and selenoprotein elongation occur. This is Selenocysteine-specific elongation factor from Homo sapiens (Human).